The sequence spans 212 residues: Large ribosomal subunit protein uL3 (212 aa).

Residues 136–155 (THGNSLSHRSNGSIGQNQTP) are disordered. At glutamine 153 the chain carries N5-methylglutamine.

The protein belongs to the universal ribosomal protein uL3 family. Part of the 50S ribosomal subunit. Forms a cluster with proteins L14 and L19. In terms of processing, methylated by PrmB.

Functionally, one of the primary rRNA binding proteins, it binds directly near the 3'-end of the 23S rRNA, where it nucleates assembly of the 50S subunit. The protein is Large ribosomal subunit protein uL3 of Shewanella oneidensis (strain ATCC 700550 / JCM 31522 / CIP 106686 / LMG 19005 / NCIMB 14063 / MR-1).